A 328-amino-acid polypeptide reads, in one-letter code: GTP 3',8-cyclase (328 aa).

Residues methionine 1–alanine 229 form the Radical SAM core domain. Arginine 8 contributes to the GTP binding site. The [4Fe-4S] cluster site is built by cysteine 15 and cysteine 19. Tyrosine 21 provides a ligand contact to S-adenosyl-L-methionine. Position 22 (cysteine 22) interacts with [4Fe-4S] cluster. A GTP-binding site is contributed by arginine 60. Glycine 64 lines the S-adenosyl-L-methionine pocket. Threonine 91 is a GTP binding site. Serine 115 contacts S-adenosyl-L-methionine. Lysine 155 lines the GTP pocket. Methionine 189 contacts S-adenosyl-L-methionine. [4Fe-4S] cluster contacts are provided by cysteine 252 and cysteine 255. A GTP-binding site is contributed by arginine 257–arginine 259. Cysteine 269 is a binding site for [4Fe-4S] cluster.

This sequence belongs to the radical SAM superfamily. MoaA family. Monomer and homodimer. The cofactor is [4Fe-4S] cluster.

It catalyses the reaction GTP + AH2 + S-adenosyl-L-methionine = (8S)-3',8-cyclo-7,8-dihydroguanosine 5'-triphosphate + 5'-deoxyadenosine + L-methionine + A + H(+). It participates in cofactor biosynthesis; molybdopterin biosynthesis. Functionally, catalyzes the cyclization of GTP to (8S)-3',8-cyclo-7,8-dihydroguanosine 5'-triphosphate. This is GTP 3',8-cyclase from Trichormus variabilis (strain ATCC 29413 / PCC 7937) (Anabaena variabilis).